The primary structure comprises 397 residues: tRNA-specific 2-thiouridylase MnmA (397 aa).

ATP is bound by residues 6-13 and L32; that span reads AMSGGVDS. C101 functions as the Nucleophile in the catalytic mechanism. C101 and C199 are joined by a disulfide. G125 is an ATP binding site. An interaction with tRNA region spans residues 148 to 150; the sequence is KDQ. Residue C199 is the Cysteine persulfide intermediate of the active site.

Belongs to the MnmA/TRMU family.

It localises to the cytoplasm. The catalysed reaction is S-sulfanyl-L-cysteinyl-[protein] + uridine(34) in tRNA + AH2 + ATP = 2-thiouridine(34) in tRNA + L-cysteinyl-[protein] + A + AMP + diphosphate + H(+). Catalyzes the 2-thiolation of uridine at the wobble position (U34) of tRNA, leading to the formation of s(2)U34. The polypeptide is tRNA-specific 2-thiouridylase MnmA (Clavibacter sepedonicus (Clavibacter michiganensis subsp. sepedonicus)).